The following is a 630-amino-acid chain: MDEMATTQISKDELDELKEAFAKVDLNSNGFICDYELHELFKEANMPLPGYKVREIIQKLMLDGDRNKDGKISFDEFVYIFQEVKSSDIAKTFRKAINRKEGICALGGTSELSSEGTQHSYSEEEKYAFVNWINKALENDPDCRHVIPMNPNTDDLFKAVGDGIVLCKMINLSVPDTIDERAINKKKLTPFIIQENLNLALNSASAIGCHVVNIGAEDLRAGKPHLVLGLLWQIIKIGLFADIELSRNEALAALLRDGETLEELMKLSPEELLLRWANFHLENSGWQKINNFSADIKDSKAYFHLLNQIAPKGQKEGEPRIDINMSGFNETDDLKRAESMLQQADKLGCRQFVTPADVVSGNPKLNLAFVANLFNKYPALTKPENQDIDWTLLEGETREERTFRNWMNSLGVNPHVNHLYADLQDALVILQLYERIKVPVDWSKVNKPPYPKLGANMKKLENCNYAVELGKHPAKFSLVGIGGQDLNDGNQTLTLALVWQLMRRYTLNVLEDLGDGQKANDDIIVSWVNRTLNEAGKSTSIQSFKDKTISSSLAVVDLIDAIQPGCINYDLVKSGTLTEDDKHNNAKYAVSMARRIGARVYALPEDLVEVKPKMVMTVFACLMGRGMKRV.

EF-hand domains lie at 12–47 and 52–87; these read DELDELKEAFAKVDLNSNGFICDYELHELFKEANMP and KVREIIQKLMLDGDRNKDGKISFDEFVYIFQEVKSS. Ca(2+) is bound by residues D25, N27, N29, E36, D65, N67, D69, K71, and E76. 2 actin-binding regions span residues 109 to 382 and 383 to 627; these read TSEL…ALTK and PENQ…GRGM. Calponin-homology (CH) domains are found at residues 123–239 and 267–378; these read EEEK…KIGL and LSPE…NKYP. Phosphoserine occurs at positions 268, 293, 326, and 339. T391 bears the Phosphothreonine mark. Calponin-homology (CH) domains follow at residues 397-506 and 518-627; these read TREE…RRYT and KAND…GRGM.

In terms of assembly, monomer.

It is found in the cytoplasm. In terms of biological role, actin-bundling protein. The protein is Plastin-3 (PLS3) of Bos taurus (Bovine).